The primary structure comprises 307 residues: GTPase Era (307 aa).

The Era-type G domain maps to 17 to 186 (RCGFVAIVGR…LELIKPYLPE (170 aa)). A G1 region spans residues 25–32 (GRPNVGKS). GTP is bound at residue 25 to 32 (GRPNVGKS). Residues 51 to 55 (QTTRN) are G2. Positions 72–75 (DTPG) are G3. GTP is bound by residues 72 to 76 (DTPGF) and 133 to 136 (NKID). The G4 stretch occupies residues 133–136 (NKID). The interval 165–167 (VSA) is G5. The region spanning 217–293 (LGEELPYAMN…FLKVWVKVKS (77 aa)) is the KH type-2 domain.

This sequence belongs to the TRAFAC class TrmE-Era-EngA-EngB-Septin-like GTPase superfamily. Era GTPase family. Monomer.

Its subcellular location is the cytoplasm. It is found in the cell inner membrane. In terms of biological role, an essential GTPase that binds both GDP and GTP, with rapid nucleotide exchange. Plays a role in 16S rRNA processing and 30S ribosomal subunit biogenesis and possibly also in cell cycle regulation and energy metabolism. This is GTPase Era from Neisseria meningitidis serogroup B (strain ATCC BAA-335 / MC58).